An 833-amino-acid polypeptide reads, in one-letter code: Capsid-associated protein Vp91 (833 aa).

The N-terminal stretch at 1-18 (MSGVVLLVLAIILITIFS) is a signal peptide. Residues asparagine 137, asparagine 180, asparagine 199, and asparagine 210 are each glycosylated (N-linked (GlcNAc...) asparagine; by host). A C2HC BV-type zinc finger spans residues 147–196 (CVPEDPCSGRPPGRYPMNELLLDTLVHNQHSDKNYSAGAHLYHPTLYLRC). Cystine bridges form between cysteine 207–cysteine 220 and cysteine 260–cysteine 273. A Chitin-binding type-2 domain is found at 223–281 (NELCEGRPDGFVLPYFPEALLVNEFVECRNGEHVVAQCADGQVFDRALMTCVHAHPCAF). N-linked (GlcNAc...) asparagine; by host glycans are attached at residues asparagine 408, asparagine 413, asparagine 588, and asparagine 609. Residues 647–673 (EPGGDGDHWAPEVPPTQPEPELEPESE) form a disordered region.

It localises to the virion. In terms of biological role, probable capsid-associated protein. The polypeptide is Capsid-associated protein Vp91 (Choristoneura fumiferana nuclear polyhedrosis virus (CfMNPV)).